The following is a 67-amino-acid chain: ATP synthase protein 8 (67 aa).

Residues Thr8–Phe24 form a helical membrane-spanning segment. Lys54 is subject to N6-acetyllysine; alternate. Lys54 carries the post-translational modification N6-succinyllysine; alternate. Lys57 is subject to N6-acetyllysine.

It belongs to the ATPase protein 8 family. F-type ATPases have 2 components, CF(1) - the catalytic core - and CF(0) - the membrane proton channel. Component of an ATP synthase complex composed of ATP5PB, ATP5MC1, ATP5F1E, ATP5PD, ATP5ME, ATP5PF, ATP5MF, MT-ATP6, MT-ATP8, ATP5F1A, ATP5F1B, ATP5F1D, ATP5F1C, ATP5PO, ATP5MG, ATP5MK and ATP5MJ. Interacts with PRICKLE3.

Its subcellular location is the mitochondrion membrane. Mitochondrial membrane ATP synthase (F(1)F(0) ATP synthase or Complex V) produces ATP from ADP in the presence of a proton gradient across the membrane which is generated by electron transport complexes of the respiratory chain. F-type ATPases consist of two structural domains, F(1) - containing the extramembraneous catalytic core and F(0) - containing the membrane proton channel, linked together by a central stalk and a peripheral stalk. During catalysis, ATP synthesis in the catalytic domain of F(1) is coupled via a rotary mechanism of the central stalk subunits to proton translocation. Part of the complex F(0) domain. Minor subunit located with subunit a in the membrane. The protein is ATP synthase protein 8 (MT-ATP8) of Rhinoceros unicornis (Greater Indian rhinoceros).